A 362-amino-acid polypeptide reads, in one-letter code: Alpha-glucoside transport ATP-binding protein AglK (362 aa).

The region spanning 4-235 is the ABC transporter domain; the sequence is LLLKDIRKSY…PANLFVARFI (232 aa). 36 to 43 lines the ATP pocket; it reads GPSGCGKS.

This sequence belongs to the ABC transporter superfamily.

It is found in the cell inner membrane. In terms of biological role, part of the binding-protein-dependent transport system for alpha-glucosides such as sucrose, maltose and trehalose. Probably responsible for energy coupling to the transport system. This Rhizobium meliloti (strain 1021) (Ensifer meliloti) protein is Alpha-glucoside transport ATP-binding protein AglK (aglK).